Reading from the N-terminus, the 488-residue chain is 3-octaprenyl-4-hydroxybenzoate carboxy-lyase (488 aa).

A Mn(2+)-binding site is contributed by N172. Residues 175–177 (IYR), 189–191 (RWL), and 194–195 (RG) each bind prenylated FMN. E238 serves as a coordination point for Mn(2+). D287 serves as the catalytic Proton donor.

It belongs to the UbiD family. Homohexamer. Prenylated FMN is required as a cofactor. Requires Mn(2+) as cofactor.

Its subcellular location is the cell membrane. The enzyme catalyses a 4-hydroxy-3-(all-trans-polyprenyl)benzoate + H(+) = a 2-(all-trans-polyprenyl)phenol + CO2. Its pathway is cofactor biosynthesis; ubiquinone biosynthesis. Its function is as follows. Catalyzes the decarboxylation of 3-octaprenyl-4-hydroxy benzoate to 2-octaprenylphenol, an intermediate step in ubiquinone biosynthesis. This chain is 3-octaprenyl-4-hydroxybenzoate carboxy-lyase, found in Pseudomonas putida (strain GB-1).